The following is a 593-amino-acid chain: Glutamate decarboxylase 1 (593 aa).

Positions 1–12 are enriched in low complexity; sequence MASSTPSPATSS. The interval 1 to 22 is disordered; the sequence is MASSTPSPATSSNAGADPNTTN. A Phosphoserine modification is found at Ser77. Residue 189 to 191 coordinates 4-aminobutanoate; sequence QLS. Residue Lys404 is modified to N6-(pyridoxal phosphate)lysine. Arg566 serves as a coordination point for 4-aminobutanoate.

It belongs to the group II decarboxylase family. Homodimer. Requires pyridoxal 5'-phosphate as cofactor. Expressed in brain and pancreatic islets.

It carries out the reaction L-glutamate + H(+) = 4-aminobutanoate + CO2. Functionally, catalyzes the synthesis of the inhibitory neurotransmitter gamma-aminobutyric acid (GABA) with pyridoxal 5'-phosphate as cofactor. The sequence is that of Glutamate decarboxylase 1 (Gad1) from Rattus norvegicus (Rat).